Consider the following 469-residue polypeptide: Coumaroyl-CoA:anthocyanidin 3-O-glucoside-6''-O-coumaroyltransferase 1 (469 aa).

Residue Met-1 is modified to N-acetylmethionine. Active-site proton acceptor residues include His-173 and Asp-410.

The protein belongs to the plant acyltransferase family. Highly expressed in flowers, leaves and roots. Lower levels of expression in stems and siliques.

In terms of biological role, involved in the acylation of the 6'' position of the 3-O-glucose residue of anthocyanin. Also able to use flavonol 3-glucosides as the acyl acceptor. The protein is Coumaroyl-CoA:anthocyanidin 3-O-glucoside-6''-O-coumaroyltransferase 1 (3AT1) of Arabidopsis thaliana (Mouse-ear cress).